A 315-amino-acid chain; its full sequence is Glycine--tRNA ligase alpha subunit (315 aa).

This sequence belongs to the class-II aminoacyl-tRNA synthetase family. As to quaternary structure, tetramer of two alpha and two beta subunits.

It is found in the cytoplasm. It catalyses the reaction tRNA(Gly) + glycine + ATP = glycyl-tRNA(Gly) + AMP + diphosphate. The polypeptide is Glycine--tRNA ligase alpha subunit (Pseudomonas putida (strain ATCC 47054 / DSM 6125 / CFBP 8728 / NCIMB 11950 / KT2440)).